A 589-amino-acid polypeptide reads, in one-letter code: Actin-histidine N-methyltransferase (589 aa).

The disordered stretch occupies residues M1–P22. Polar residues predominate over residues Q10 to V20. S-adenosyl-L-methionine is bound by residues R75, E104–F106, R254, D275–H279, and S325–F327. One can recognise an SET domain in the interval E94–G314. S513 is modified (phosphoserine). The segment at L547 to E589 is disordered. The segment covering R559–E589 has biased composition (basic and acidic residues).

The protein belongs to the class V-like SAM-binding methyltransferase superfamily. SETD3 actin-histidine methyltransferase family. As to quaternary structure, interacts with MYOD1. In terms of processing, phosphorylated by GSK3B, which is required for recognition by the SCF(FBXW7) complex and subsequent degradation. Post-translationally, ubiquitinated by the SCF(FBXW7) complex following phosphorylation by GSK3B, leading to its degradation by the proteasome.

The protein localises to the cytoplasm. The protein resides in the nucleus. The catalysed reaction is L-histidyl-[protein] + S-adenosyl-L-methionine = N(tele)-methyl-L-histidyl-[protein] + S-adenosyl-L-homocysteine + H(+). Functionally, protein-histidine N-methyltransferase that specifically mediates 3-methylhistidine (tele-methylhistidine) methylation of actin at 'His-73'. Histidine methylation of actin is required for smooth muscle contraction of the laboring uterus during delivery. Does not have protein-lysine N-methyltransferase activity and probably only catalyzes histidine methylation of actin. This chain is Actin-histidine N-methyltransferase, found in Dasypus novemcinctus (Nine-banded armadillo).